The following is a 266-amino-acid chain: Hemin import ATP-binding protein HmuV (266 aa).

The ABC transporter domain occupies 2-242; that stretch reads IEAVDICVQR…QNLRDVYSCS (241 aa). 34–41 contributes to the ATP binding site; that stretch reads GPNGSGKS.

It belongs to the ABC transporter superfamily. Heme (hemin) importer (TC 3.A.1.14.5) family. The complex is composed of two ATP-binding proteins (HmuV), two transmembrane proteins (HmuU) and a solute-binding protein (HmuT).

It localises to the cell inner membrane. Functionally, part of the ABC transporter complex HmuTUV involved in hemin import. Responsible for energy coupling to the transport system. In Bartonella henselae (strain ATCC 49882 / DSM 28221 / CCUG 30454 / Houston 1) (Rochalimaea henselae), this protein is Hemin import ATP-binding protein HmuV.